A 391-amino-acid polypeptide reads, in one-letter code: Succinyl-diaminopimelate desuccinylase (391 aa).

Histidine 67 contributes to the Zn(2+) binding site. Aspartate 69 is a catalytic residue. Aspartate 101 contacts Zn(2+). Catalysis depends on glutamate 135, which acts as the Proton acceptor. Glutamate 136, glutamate 164, and histidine 353 together coordinate Zn(2+).

It belongs to the peptidase M20A family. DapE subfamily. Homodimer. It depends on Zn(2+) as a cofactor. Co(2+) serves as cofactor.

It catalyses the reaction N-succinyl-(2S,6S)-2,6-diaminopimelate + H2O = (2S,6S)-2,6-diaminopimelate + succinate. It participates in amino-acid biosynthesis; L-lysine biosynthesis via DAP pathway; LL-2,6-diaminopimelate from (S)-tetrahydrodipicolinate (succinylase route): step 3/3. In terms of biological role, catalyzes the hydrolysis of N-succinyl-L,L-diaminopimelic acid (SDAP), forming succinate and LL-2,6-diaminopimelate (DAP), an intermediate involved in the bacterial biosynthesis of lysine and meso-diaminopimelic acid, an essential component of bacterial cell walls. The protein is Succinyl-diaminopimelate desuccinylase of Rickettsia bellii (strain OSU 85-389).